A 335-amino-acid polypeptide reads, in one-letter code: Methionine import ATP-binding protein MetN 1 (335 aa).

In terms of domain architecture, ABC transporter spans 2–242; it reads IEFHNVHKTY…PQHPTTRRFV (241 aa). Residue 38 to 45 participates in ATP binding; it reads GHSGAGKS.

This sequence belongs to the ABC transporter superfamily. Methionine importer (TC 3.A.1.24) family. As to quaternary structure, the complex is composed of two ATP-binding proteins (MetN), two transmembrane proteins (MetI) and a solute-binding protein (MetQ).

The protein localises to the cell inner membrane. It carries out the reaction L-methionine(out) + ATP + H2O = L-methionine(in) + ADP + phosphate + H(+). It catalyses the reaction D-methionine(out) + ATP + H2O = D-methionine(in) + ADP + phosphate + H(+). In terms of biological role, part of the ABC transporter complex MetNIQ involved in methionine import. Responsible for energy coupling to the transport system. In Pseudomonas savastanoi pv. phaseolicola (strain 1448A / Race 6) (Pseudomonas syringae pv. phaseolicola (strain 1448A / Race 6)), this protein is Methionine import ATP-binding protein MetN 1.